Reading from the N-terminus, the 901-residue chain is Alanine--tRNA ligase (901 aa).

Residues His600, His604, Cys704, and His708 each contribute to the Zn(2+) site.

This sequence belongs to the class-II aminoacyl-tRNA synthetase family. It depends on Zn(2+) as a cofactor.

The protein localises to the cytoplasm. The catalysed reaction is tRNA(Ala) + L-alanine + ATP = L-alanyl-tRNA(Ala) + AMP + diphosphate. Catalyzes the attachment of alanine to tRNA(Ala) in a two-step reaction: alanine is first activated by ATP to form Ala-AMP and then transferred to the acceptor end of tRNA(Ala). Also edits incorrectly charged Ser-tRNA(Ala) and Gly-tRNA(Ala) via its editing domain. This Ignicoccus hospitalis (strain KIN4/I / DSM 18386 / JCM 14125) protein is Alanine--tRNA ligase.